Here is a 97-residue protein sequence, read N- to C-terminus: Secreted RxLR effector protein BLR05 (97 aa).

The N-terminal stretch at 1–21 (MGPQHLLALVVVSILVAAGNA) is a signal peptide. Positions 32-60 (RALRPSVIADQEHAVHAIPATNFISKDED) match the RxLR-dEER motif. A helical membrane pass occupies residues 69–89 (IEIIRIAIFSLLVVGVFAIMA).

The protein belongs to the RxLR effector family. In terms of assembly, interacts with host transcription factor NAC069.

It localises to the secreted. It is found in the host endoplasmic reticulum membrane. Its function is as follows. Secreted effector that inhibits stress-induced relocalization of the transcription factor NAC069 to the nucleus, thus affecting its broad role in abiotic and biotic stress responses. In Bremia lactucae (Lettuce downy mildew), this protein is Secreted RxLR effector protein BLR05.